A 358-amino-acid chain; its full sequence is Magnesium-protoporphyrin IX monomethyl ester [oxidative] cyclase 3 (358 aa).

The protein belongs to the AcsF family. It depends on Fe cation as a cofactor.

It carries out the reaction Mg-protoporphyrin IX 13-monomethyl ester + 3 NADPH + 3 O2 + 2 H(+) = 3,8-divinyl protochlorophyllide a + 3 NADP(+) + 5 H2O. Its pathway is porphyrin-containing compound metabolism; chlorophyll biosynthesis (light-independent). Catalyzes the formation of the isocyclic ring in chlorophyll biosynthesis. Mediates the cyclase reaction, which results in the formation of divinylprotochlorophyllide (Pchlide) characteristic of all chlorophylls from magnesium-protoporphyrin IX 13-monomethyl ester (MgPMME). The chain is Magnesium-protoporphyrin IX monomethyl ester [oxidative] cyclase 3 from Nostoc sp. (strain PCC 7120 / SAG 25.82 / UTEX 2576).